Here is a 249-residue protein sequence, read N- to C-terminus: MMKKMKWALVLALGLTGLNAFGQETPEVKIEKLKDNLYVYTTYNTFNGTKYAANAVYLVTSKGVVVIDSPWGEEKFKNFTDEIYKRHGKKVIMNIATHSHDDRAGGLEYFKSLGAKTYSTKMTDSILAKDNKPRAQYTFDNNKSFKVGKDEFQVYYPGKGHTADHVVVWFPKDKVLVGGCIIKSGDSKDLGFLGEAYVNDWTQSVHNIQKKFPNVQYVVAGHDDWKDQTAIQHTLDLISEYQQKQKASN.

A signal peptide spans 1 to 22 (MMKKMKWALVLALGLTGLNAFG). His-98, His-100, Asp-102, His-161, and Cys-180 together coordinate Zn(2+). Lys-183 provides a ligand contact to substrate. Zn(2+) is bound at residue His-222.

Belongs to the metallo-beta-lactamase superfamily. Class-B beta-lactamase family. In terms of assembly, monomer. Zn(2+) is required as a cofactor.

The protein resides in the periplasm. The enzyme catalyses a beta-lactam + H2O = a substituted beta-amino acid. Functionally, confers resistance to the different beta-lactams antibiotics (penicillin, cephalosporin and carbapenem) via the hydrolysis of the beta-lactam ring. The sequence is that of Metallo-beta-lactamase type 2 (blaB4) from Elizabethkingia meningoseptica (Chryseobacterium meningosepticum).